The chain runs to 519 residues: ATP synthase subunit beta, mitochondrial (519 aa).

195-202 (GGAGVGKT) provides a ligand contact to ATP.

Belongs to the ATPase alpha/beta chains family. In terms of assembly, F-type ATPases have 2 components, CF(1) - the catalytic core - and CF(0) - the membrane proton channel. CF(1) has five subunits: alpha(3), beta(3), gamma(1), delta(1), epsilon(1). CF(0) has three main subunits: a, b and c.

The protein localises to the mitochondrion. It is found in the mitochondrion inner membrane. It carries out the reaction ATP + H2O + 4 H(+)(in) = ADP + phosphate + 5 H(+)(out). Functionally, mitochondrial membrane ATP synthase (F(1)F(0) ATP synthase or Complex V) produces ATP from ADP in the presence of a proton gradient across the membrane which is generated by electron transport complexes of the respiratory chain. F-type ATPases consist of two structural domains, F(1) - containing the extramembraneous catalytic core, and F(0) - containing the membrane proton channel, linked together by a central stalk and a peripheral stalk. During catalysis, ATP synthesis in the catalytic domain of F(1) is coupled via a rotary mechanism of the central stalk subunits to proton translocation. Subunits alpha and beta form the catalytic core in F(1). Rotation of the central stalk against the surrounding alpha(3)beta(3) subunits leads to hydrolysis of ATP in three separate catalytic sites on the beta subunits. This chain is ATP synthase subunit beta, mitochondrial (atp-2), found in Neurospora crassa (strain ATCC 24698 / 74-OR23-1A / CBS 708.71 / DSM 1257 / FGSC 987).